A 156-amino-acid polypeptide reads, in one-letter code: Small ribosomal subunit protein uS7 (156 aa).

The protein belongs to the universal ribosomal protein uS7 family. As to quaternary structure, part of the 30S ribosomal subunit. Contacts proteins S9 and S11.

Its function is as follows. One of the primary rRNA binding proteins, it binds directly to 16S rRNA where it nucleates assembly of the head domain of the 30S subunit. Is located at the subunit interface close to the decoding center, probably blocks exit of the E-site tRNA. This Dinoroseobacter shibae (strain DSM 16493 / NCIMB 14021 / DFL 12) protein is Small ribosomal subunit protein uS7.